Consider the following 154-residue polypeptide: Crossover junction endodeoxyribonuclease RuvC (154 aa).

Residues aspartate 7, glutamate 67, and aspartate 139 contribute to the active site. Residues aspartate 7, glutamate 67, and aspartate 139 each contribute to the Mg(2+) site.

The protein belongs to the RuvC family. Homodimer which binds Holliday junction (HJ) DNA. The HJ becomes 2-fold symmetrical on binding to RuvC with unstacked arms; it has a different conformation from HJ DNA in complex with RuvA. In the full resolvosome a probable DNA-RuvA(4)-RuvB(12)-RuvC(2) complex forms which resolves the HJ. Mg(2+) is required as a cofactor.

Its subcellular location is the cytoplasm. It carries out the reaction Endonucleolytic cleavage at a junction such as a reciprocal single-stranded crossover between two homologous DNA duplexes (Holliday junction).. Its function is as follows. The RuvA-RuvB-RuvC complex processes Holliday junction (HJ) DNA during genetic recombination and DNA repair. Endonuclease that resolves HJ intermediates. Cleaves cruciform DNA by making single-stranded nicks across the HJ at symmetrical positions within the homologous arms, yielding a 5'-phosphate and a 3'-hydroxyl group; requires a central core of homology in the junction. The consensus cleavage sequence is 5'-(A/T)TT(C/G)-3'. Cleavage occurs on the 3'-side of the TT dinucleotide at the point of strand exchange. HJ branch migration catalyzed by RuvA-RuvB allows RuvC to scan DNA until it finds its consensus sequence, where it cleaves and resolves the cruciform DNA. In Prochlorococcus marinus (strain NATL1A), this protein is Crossover junction endodeoxyribonuclease RuvC.